The sequence spans 225 residues: 2-C-methyl-D-erythritol 4-phosphate cytidylyltransferase (225 aa).

This sequence belongs to the IspD/TarI cytidylyltransferase family. IspD subfamily.

It catalyses the reaction 2-C-methyl-D-erythritol 4-phosphate + CTP + H(+) = 4-CDP-2-C-methyl-D-erythritol + diphosphate. It participates in isoprenoid biosynthesis; isopentenyl diphosphate biosynthesis via DXP pathway; isopentenyl diphosphate from 1-deoxy-D-xylulose 5-phosphate: step 2/6. Its function is as follows. Catalyzes the formation of 4-diphosphocytidyl-2-C-methyl-D-erythritol from CTP and 2-C-methyl-D-erythritol 4-phosphate (MEP). The polypeptide is 2-C-methyl-D-erythritol 4-phosphate cytidylyltransferase (Chromobacterium violaceum (strain ATCC 12472 / DSM 30191 / JCM 1249 / CCUG 213 / NBRC 12614 / NCIMB 9131 / NCTC 9757 / MK)).